A 73-amino-acid chain; its full sequence is Protein F9 homolog (73 aa).

The Virion surface portion of the chain corresponds to 1–34 (GHAAANCALARVATALTRRVPASRHGLAEGGTPP). The chain crosses the membrane as a helical span at residues 35–55 (WTLLLAVAAVTVLGVVAVSLL). Residues 56-73 (RRALRVRYRFARPAALRA) lie on the Intravirion side of the membrane.

It belongs to the chordopoxvirinae L1 protein family.

The protein localises to the virion membrane. The sequence is that of Protein F9 homolog from Capra hircus (Goat).